Reading from the N-terminus, the 335-residue chain is 2-acylglycerol O-acyltransferase 1 (335 aa).

A run of 2 helical transmembrane segments spans residues 24–44 and 47–67; these read WVFS…CLVL and VWLL…TPQA. Asparagine 125 and asparagine 180 each carry an N-linked (GlcNAc...) asparagine glycan.

It belongs to the diacylglycerol acyltransferase family.

The protein localises to the endoplasmic reticulum membrane. The catalysed reaction is a 2-acylglycerol + an acyl-CoA = a 1,2-diacylglycerol + CoA. It carries out the reaction a 2-acylglycerol + an acyl-CoA = a 1,2-diacyl-sn-glycerol + CoA. It catalyses the reaction a 2-acylglycerol + an acyl-CoA = a 2,3-diacyl-sn-glycerol + CoA. The enzyme catalyses a 1-acylglycerol + an acyl-CoA = a 1,2-diacylglycerol + CoA. The catalysed reaction is a 1-acylglycerol + an acyl-CoA = a 1,3-diacylglycerol + CoA. It carries out the reaction a 1-acyl-sn-glycerol + an acyl-CoA = a 1,3-diacyl-sn-glycerol + CoA. It catalyses the reaction a 3-acyl-sn-glycerol + an acyl-CoA = a 1,3-diacyl-sn-glycerol + CoA. It functions in the pathway glycerolipid metabolism; triacylglycerol biosynthesis. In terms of biological role, involved in glycerolipid synthesis and lipid metabolism. Catalyzes the formation of diacylglycerol, the precursor of triacylglycerol, by transferring the acyl chain of a fatty acyl-CoA to a monoacylglycerol, mainly at the sn-1 or sn-3 positions. It uses both sn-2-monoacylglycerol (2-acylglycerol) and sn-1-monoacylglycerol (1-acyl-sn-glycerol) equally well as substrates, and uses sn-3-monoacylglycerol (3-acyl-sn-glycerol) with lower efficiency. The chain is 2-acylglycerol O-acyltransferase 1 (mogat1) from Xenopus laevis (African clawed frog).